We begin with the raw amino-acid sequence, 92 residues long: Neurophysin 2 (92 aa).

Disulfide bonds link Cys-10/Cys-54, Cys-13/Cys-27, Cys-21/Cys-44, Cys-28/Cys-34, Cys-61/Cys-73, Cys-67/Cys-85, and Cys-74/Cys-79.

Belongs to the vasopressin/oxytocin family. In terms of assembly, there is an equilibrium between the monomeric and dimeric forms. On peptide binding the dimeric form predominates. In terms of processing, a shorter neurophysin molecule (1-90) also exists and is probably derived from the complete protein by proteolytic degradation (in vivo or after extraction).

Its subcellular location is the secreted. In terms of biological role, neurophysin 2 specifically binds vasopressin. In Loxodonta africana (African elephant), this protein is Neurophysin 2 (AVP).